Reading from the N-terminus, the 453-residue chain is Formimidoylglutamate deiminase (453 aa).

Zn(2+) is bound by residues H56 and H58. Residues Q61, R82, Y121, H206, and R209 each contribute to the N-formimidoyl-L-glutamate site. Zn(2+) is bound at residue H232. E235 serves as a coordination point for N-formimidoyl-L-glutamate. Residues H269 and D320 each act as proton acceptor in the active site. Residue D320 participates in Zn(2+) binding.

The protein belongs to the metallo-dependent hydrolases superfamily. As to quaternary structure, homodimer. The cofactor is Zn(2+).

The catalysed reaction is N-formimidoyl-L-glutamate + H2O = N-formyl-L-glutamate + NH4(+). It participates in amino-acid degradation; L-histidine degradation into L-glutamate; L-glutamate from N-formimidoyl-L-glutamate (deiminase route): step 1/2. Inhibited by the metal chelator dipicolinate. Inhibited by N-formimino-L-aspartate and N-guanidino-L-glutaric acid. Its function is as follows. Catalyzes the hydrolysis of N-formimino-L-glutamate to N-formyl-L-glutamate and ammonia. The protein is Formimidoylglutamate deiminase of Pseudomonas aeruginosa (strain ATCC 15692 / DSM 22644 / CIP 104116 / JCM 14847 / LMG 12228 / 1C / PRS 101 / PAO1).